A 116-amino-acid chain; its full sequence is DNA polymerase epsilon subunit 4 (116 aa).

Residues 1 to 10 (MAAAAPGSGA) are compositionally biased toward low complexity. The segment at 1–36 (MAAAAPGSGAAREEEGTGGDAATPQPPAPTSAPGAR) is disordered.

In terms of assembly, component of the DNA polymerase epsilon complex consisting of four subunits: the catalytic subunit POLE and the accessory subunits POLE2, POLE3 and POLE4. Interaction with POLE3 is a prerequisite for further binding with POLE and POLE2.

It is found in the nucleus. Accessory component of the DNA polymerase epsilon complex. Participates in DNA repair and in chromosomal DNA replication. This chain is DNA polymerase epsilon subunit 4 (POLE4), found in Bos taurus (Bovine).